Reading from the N-terminus, the 198-residue chain is Glycerol-3-phosphate acyltransferase (198 aa).

A run of 5 helical transmembrane segments spans residues 5-25 (LILLSLLAYVIGSIPSGLWIG), 56-76 (SIVTVMDILKGTVATLLPFFF), 84-104 (FWLLTGAFAIIGHSFPLFAGF), 114-134 (AGVILAYAPLLFVAALIIFLL), and 158-178 (LFMGDWILIILIACITLFVVW).

Belongs to the PlsY family. As to quaternary structure, probably interacts with PlsX.

It localises to the cell membrane. It catalyses the reaction an acyl phosphate + sn-glycerol 3-phosphate = a 1-acyl-sn-glycero-3-phosphate + phosphate. Its pathway is lipid metabolism; phospholipid metabolism. Functionally, catalyzes the transfer of an acyl group from acyl-phosphate (acyl-PO(4)) to glycerol-3-phosphate (G3P) to form lysophosphatidic acid (LPA). This enzyme utilizes acyl-phosphate as fatty acyl donor, but not acyl-CoA or acyl-ACP. This Listeria welshimeri serovar 6b (strain ATCC 35897 / DSM 20650 / CCUG 15529 / CIP 8149 / NCTC 11857 / SLCC 5334 / V8) protein is Glycerol-3-phosphate acyltransferase.